We begin with the raw amino-acid sequence, 645 residues long: Threonine--tRNA ligase (645 aa).

Residues 1–63 (MEQINIQFPD…ETDGSIEIVT (63 aa)) form the TGS domain. Residues 242-540 (DHRKIGKELE…LTEETKGAFP (299 aa)) are catalytic. Zn(2+)-binding residues include Cys336, His387, and His517.

The protein belongs to the class-II aminoacyl-tRNA synthetase family. As to quaternary structure, homodimer. Requires Zn(2+) as cofactor.

The protein resides in the cytoplasm. It catalyses the reaction tRNA(Thr) + L-threonine + ATP = L-threonyl-tRNA(Thr) + AMP + diphosphate + H(+). In terms of biological role, catalyzes the attachment of threonine to tRNA(Thr) in a two-step reaction: L-threonine is first activated by ATP to form Thr-AMP and then transferred to the acceptor end of tRNA(Thr). Also edits incorrectly charged L-seryl-tRNA(Thr). In Staphylococcus aureus (strain JH1), this protein is Threonine--tRNA ligase.